Consider the following 569-residue polypeptide: MRASQWFLVTQKETPNDAEIASHQLMLRSGMIRKLGSGLYTWMPLGLRVLRKVENIVREEMNKTHAMELLMPSVQPAELWQETGRWETFGGQLLTMKDSNQREYCFGPTHEEVITDIMRNELQSYKQLPVNFYQIQTKFRDEIRPRFGVMRAREFIMKDAYSFHLSLESLQETYKDMYQAYCRIFDRMGLKYRAVEADTGAIGGSASHEFQVLAESGEDLIFYSDASDYAANIEQATSLKPLKANQPCNETITLVDTPNQKTIDEVASFLGIASNQTIKTLIVKGKEHPMVALVLRGDDELNEVKAIKHPLVHAPLSFIDEELILKTLKTPLGSIGPIQLNIPVIVDHHALAMPSFVCGANQADKHFINAAWERDAKYDDAYDLRNVKEGDPSPDGKGTLHCCRGIEVGHVFQLGDKYAKAMNASVINEQGQLQTMIMGCYGLGITRVVAAAIEQHHDEHGIIWPQALAPFQVNIIPLNGARSQAVKEQAESLYQQLKSHGIDVLLDDRNERAGVLFADNDLIGIPHRLVVSERNLEQGCVEYKARISSETQLINLDKVVNFIIELINK.

The protein belongs to the class-II aminoacyl-tRNA synthetase family. ProS type 1 subfamily. Homodimer.

Its subcellular location is the cytoplasm. It catalyses the reaction tRNA(Pro) + L-proline + ATP = L-prolyl-tRNA(Pro) + AMP + diphosphate. Its function is as follows. Catalyzes the attachment of proline to tRNA(Pro) in a two-step reaction: proline is first activated by ATP to form Pro-AMP and then transferred to the acceptor end of tRNA(Pro). As ProRS can inadvertently accommodate and process non-cognate amino acids such as alanine and cysteine, to avoid such errors it has two additional distinct editing activities against alanine. One activity is designated as 'pretransfer' editing and involves the tRNA(Pro)-independent hydrolysis of activated Ala-AMP. The other activity is designated 'posttransfer' editing and involves deacylation of mischarged Ala-tRNA(Pro). The misacylated Cys-tRNA(Pro) is not edited by ProRS. The polypeptide is Proline--tRNA ligase (Legionella pneumophila subsp. pneumophila (strain Philadelphia 1 / ATCC 33152 / DSM 7513)).